The following is a 416-amino-acid chain: Floricaula/leafy homolog 2 (416 aa).

Residues E154 to Q237 are disordered. Acidic residues predominate over residues A210–N225. 3 consecutive DNA-binding regions follow at residues R238–F242, N307–Y314, and Y378–T381.

Belongs to the FLO/LFY family. Expressed in floral meristems and in indeterminate vegetative meristems.

The protein localises to the nucleus. In terms of biological role, probable transcription factor that act to specify determinacy in the progenitor cells for both flowers and leaves. In Nicotiana tabacum (Common tobacco), this protein is Floricaula/leafy homolog 2 (FL2).